The primary structure comprises 83 residues: Large ribosomal subunit protein bL27 (83 aa).

Belongs to the bacterial ribosomal protein bL27 family.

The protein is Large ribosomal subunit protein bL27 (rpmA) of Thermotoga maritima (strain ATCC 43589 / DSM 3109 / JCM 10099 / NBRC 100826 / MSB8).